The sequence spans 216 residues: 3-isopropylmalate dehydratase small subunit (216 aa).

This sequence belongs to the LeuD family. LeuD type 1 subfamily. In terms of assembly, heterodimer of LeuC and LeuD.

It carries out the reaction (2R,3S)-3-isopropylmalate = (2S)-2-isopropylmalate. The protein operates within amino-acid biosynthesis; L-leucine biosynthesis; L-leucine from 3-methyl-2-oxobutanoate: step 2/4. In terms of biological role, catalyzes the isomerization between 2-isopropylmalate and 3-isopropylmalate, via the formation of 2-isopropylmaleate. The chain is 3-isopropylmalate dehydratase small subunit from Burkholderia mallei (strain NCTC 10247).